A 633-amino-acid polypeptide reads, in one-letter code: Basic helix-loop-helix ARNT-like protein 1 (633 aa).

Residues 1–65 (MADQRMDISS…GMDTDKDDQH (65 aa)) are disordered. Phosphoserine; by GSK3-beta is present on S17. Positions 24–33 (ISSSLSTSGM) are enriched in polar residues. Positions 36–41 (NRKRKG) match the Nuclear localization signal motif. In terms of domain architecture, bHLH spans 79 to 132 (NAREAHSQIEKRRRDKMNSFIDELASLVPTCNAMSRKLDKLTVLRMAVQHMKTL). Residue S85 is modified to Phosphoserine. Phosphoserine; by CK2 is present on S97. Positions 149 to 159 (LSDDELKHLIL) match the Nuclear export signal 1 motif. Residues 150–222 (SDDELKHLIL…EQLSSSDTAP (73 aa)) form the PAS 1 domain. K259 participates in a covalent cross-link: Glycyl lysine isopeptide (Lys-Gly) (interchain with G-Cter in SUMO2 and SUMO3). Residue K266 forms a Glycyl lysine isopeptide (Lys-Gly) (interchain with G-Cter in SUMO) linkage. The region spanning 333–403 (PQPVNGEIRV…ECHRQVLQTR (71 aa)) is the PAS 2 domain. Residues 368–376 (LAYLPQELL) carry the Nuclear export signal 2 motif. Positions 408-451 (TNCYKFKIKDGSFITLRSRWFSFMNPWTKEVEYIVSTNTVVSTN) constitute a PAC domain. 2 disordered regions span residues 472–499 (SVLQAGEGGPKRTHPTVPGIPGGTRAGA) and 518–555 (GSSPSSCGSSPLNITSTPPPDTSSPGGKKILNGGTPDI). A compositionally biased stretch (low complexity) spans 518–528 (GSSPSSCGSSP). K545 is subject to N6-acetyllysine.

As to quaternary structure, component of the circadian clock oscillator which includes the CRY1/2 proteins, CLOCK or NPAS2, BMAL1 or BMAL2, CSNK1D and/or CSNK1E, TIMELESS and the PER1/2/3 proteins. Forms a heterodimer with CLOCK. The CLOCK-BMAL1 heterodimer is required for E-box-dependent transactivation, for CLOCK nuclear translocation and degradation, and, for phosphorylation of both CLOCK and BMAL1. Interacts with PER1, PER2, CRY1 and CRY2 and this interaction requires a translocation to the nucleus. Interaction of the CLOCK-BMAL1 heterodimer with PER or CRY inhibits transcription activation. Post-translationally, ubiquitinated, leading to its proteasomal degradation. Deubiquitinated by USP9X. In terms of processing, O-glycosylated; contains O-GlcNAc. O-glycosylation by OGT prevents protein degradation by inhibiting ubiquitination. It also stabilizes the CLOCK-BMAL1 heterodimer thereby increasing CLOCK-BMAL1-mediated transcription of genes in the negative loop of the circadian clock such as PER1/2/3 and CRY1/2. Acetylated on Lys-545 by CLOCK during the repression phase of the circadian cycle. Acetylation facilitates recruitment of CRY1 protein and initiates the repression phase of the circadian cycle. Acetylated at Lys-545 by KAT5 during the activation phase of the cycle, leading to recruitment of the positive transcription elongation factor b (P-TEFb) and BRD4, followed by productive elongation of circadian transcripts. Deacetylated by SIRT1, which may result in decreased protein stability. Post-translationally, phosphorylated upon dimerization with CLOCK. Phosphorylation enhances the transcriptional activity, alters the subcellular localization and decreases the stability of the CLOCK-BMAL1 heterodimer by promoting its degradation. Phosphorylation shows circadian variations in the liver with a peak between CT10 to CT14. Phosphorylation at Ser-97 by CK2 is essential for its nuclear localization, its interaction with CLOCK and controls CLOCK nuclear entry. Dephosphorylation at Ser-85 is important for dimerization with CLOCK and transcriptional activity. In terms of processing, sumoylated on Lys-266 upon dimerization with CLOCK. Predominantly conjugated to poly-SUMO2/3 rather than SUMO1 and the level of these conjugates undergo rhythmic variation, peaking at CT9-CT12. Sumoylation localizes it exclusively to the PML body and promotes its ubiquitination in the PML body, ubiquitin-dependent proteasomal degradation and the transcriptional activity of the CLOCK-BMAL1 heterodimer. Undergoes lysosome-mediated degradation in a time-dependent manner in the liver.

The protein resides in the nucleus. It is found in the cytoplasm. The protein localises to the PML body. Functionally, transcriptional activator which forms a core component of the circadian clock. The circadian clock, an internal time-keeping system, regulates various physiological processes through the generation of approximately 24 hour circadian rhythms in gene expression, which are translated into rhythms in metabolism and behavior. It is derived from the Latin roots 'circa' (about) and 'diem' (day) and acts as an important regulator of a wide array of physiological functions including metabolism, sleep, body temperature, blood pressure, endocrine, immune, cardiovascular, and renal function. Consists of two major components: the central clock, residing in the suprachiasmatic nucleus (SCN) of the brain, and the peripheral clocks that are present in nearly every tissue and organ system. Both the central and peripheral clocks can be reset by environmental cues, also known as Zeitgebers (German for 'timegivers'). The predominant Zeitgeber for the central clock is light, which is sensed by retina and signals directly to the SCN. The central clock entrains the peripheral clocks through neuronal and hormonal signals, body temperature and feeding-related cues, aligning all clocks with the external light/dark cycle. Circadian rhythms allow an organism to achieve temporal homeostasis with its environment at the molecular level by regulating gene expression to create a peak of protein expression once every 24 hours to control when a particular physiological process is most active with respect to the solar day. Transcription and translation of core clock components (CLOCK, NPAS2, BMAL1, BMAL2, PER1, PER2, PER3, CRY1 and CRY2) plays a critical role in rhythm generation, whereas delays imposed by post-translational modifications (PTMs) are important for determining the period (tau) of the rhythms (tau refers to the period of a rhythm and is the length, in time, of one complete cycle). A diurnal rhythm is synchronized with the day/night cycle, while the ultradian and infradian rhythms have a period shorter and longer than 24 hours, respectively. Disruptions in the circadian rhythms contribute to the pathology of cardiovascular diseases, cancer, metabolic syndromes and aging. A transcription/translation feedback loop (TTFL) forms the core of the molecular circadian clock mechanism. Transcription factors, CLOCK or NPAS2 and BMAL1 or BMAL2, form the positive limb of the feedback loop, act in the form of a heterodimer and activate the transcription of core clock genes and clock-controlled genes (involved in key metabolic processes), harboring E-box elements (5'-CACGTG-3') within their promoters. The core clock genes: PER1/2/3 and CRY1/2 which are transcriptional repressors form the negative limb of the feedback loop and interact with the CLOCK|NPAS2-BMAL1|BMAL2 heterodimer inhibiting its activity and thereby negatively regulating their own expression. This heterodimer also activates nuclear receptors NR1D1/2 and RORA/B/G, which form a second feedback loop and which activate and repress BMAL1 transcription, respectively. The preferred binding motif for the CLOCK-BMAL1 heterodimer is 5'-CACGTGA-3', which contains a flanking adenine nucleotide at the 3-prime end of the canonical 6-nucleotide E-box sequence. CLOCK specifically binds to the half-site 5'-CAC-3', while BMAL1 binds to the half-site 5'-GTGA-3'. Essential for the rhythmic interaction of CLOCK with ASS1 and plays a critical role in positively regulating CLOCK-mediated acetylation of ASS1. Plays a role in protecting against lethal sepsis by limiting the expression of immune checkpoint protein CD274 in macrophages in a PKM2-dependent manner. This is Basic helix-loop-helix ARNT-like protein 1 (BMAL1) from Tyto alba (Barn owl).